Consider the following 145-residue polypeptide: Mite group 2 allergen Eur m 2 (145 aa).

The signal sequence occupies residues 1 to 16; sequence MYKILCLSLLVAAVAA. Intrachain disulfides connect cysteine 24/cysteine 135, cysteine 37/cysteine 43, and cysteine 89/cysteine 94.

The protein belongs to the NPC2 family.

The protein localises to the secreted. The chain is Mite group 2 allergen Eur m 2 (EURM2) from Euroglyphus maynei (Mayne's house dust mite).